Consider the following 1374-residue polypeptide: DNA-directed RNA polymerase subunit beta (1374 aa).

It belongs to the RNA polymerase beta chain family. The RNAP catalytic core consists of 2 alpha, 1 beta, 1 beta' and 1 omega subunit. When a sigma factor is associated with the core the holoenzyme is formed, which can initiate transcription.

It carries out the reaction RNA(n) + a ribonucleoside 5'-triphosphate = RNA(n+1) + diphosphate. Functionally, DNA-dependent RNA polymerase catalyzes the transcription of DNA into RNA using the four ribonucleoside triphosphates as substrates. This chain is DNA-directed RNA polymerase subunit beta, found in Rhodopseudomonas palustris (strain TIE-1).